The primary structure comprises 545 residues: CTP synthase (545 aa).

The interval 1-266 is amidoligase domain; that stretch reads MATNYIFVTG…DDFVCERFRL (266 aa). CTP is bound at residue Ser-14. A UTP-binding site is contributed by Ser-14. ATP-binding positions include 15 to 20 and Asp-72; that span reads SLGKGI. Residues Asp-72 and Glu-140 each contribute to the Mg(2+) site. Residues 147 to 149, 187 to 192, and Lys-223 contribute to the CTP site; these read DIE and KTKPTQ. Residues 187–192 and Lys-223 contribute to the UTP site; that span reads KTKPTQ. Residue 239 to 241 participates in ATP binding; the sequence is KDV. Positions 291–542 constitute a Glutamine amidotransferase type-1 domain; sequence TIGMVGKYTE…VKAAYENHKK (252 aa). Gly-352 provides a ligand contact to L-glutamine. The Nucleophile; for glutamine hydrolysis role is filled by Cys-379. Residues 380 to 383, Glu-403, and Arg-470 each bind L-glutamine; that span reads LGMQ. Residues His-515 and Glu-517 contribute to the active site.

Belongs to the CTP synthase family. In terms of assembly, homotetramer.

The enzyme catalyses UTP + L-glutamine + ATP + H2O = CTP + L-glutamate + ADP + phosphate + 2 H(+). The catalysed reaction is L-glutamine + H2O = L-glutamate + NH4(+). It catalyses the reaction UTP + NH4(+) + ATP = CTP + ADP + phosphate + 2 H(+). The protein operates within pyrimidine metabolism; CTP biosynthesis via de novo pathway; CTP from UDP: step 2/2. Allosterically activated by GTP, when glutamine is the substrate; GTP has no effect on the reaction when ammonia is the substrate. The allosteric effector GTP functions by stabilizing the protein conformation that binds the tetrahedral intermediate(s) formed during glutamine hydrolysis. Inhibited by the product CTP, via allosteric rather than competitive inhibition. In terms of biological role, catalyzes the ATP-dependent amination of UTP to CTP with either L-glutamine or ammonia as the source of nitrogen. Regulates intracellular CTP levels through interactions with the four ribonucleotide triphosphates. The sequence is that of CTP synthase from Haemophilus influenzae (strain PittEE).